Here is a 243-residue protein sequence, read N- to C-terminus: Sarcospan (243 aa).

The interval 1–43 (MGKNKQPRGQQRQGGPPAADAAGPDDMEPKKGTGAPKECGEEE) is disordered. Topologically, residues 1-53 (MGKNKQPRGQQRQGGPPAADAAGPDDMEPKKGTGAPKECGEEEPRTCCGCRFP) are cytoplasmic. A compositionally biased stretch (low complexity) spans 7–24 (PRGQQRQGGPPAADAAGP). Residues 54–74 (LLLALLQLALGIAVTVVGFLM) traverse the membrane as a helical segment. The Extracellular portion of the chain corresponds to 75–86 (ASISSSLLVRDT). Residues 87-107 (PFWAGIIVCLVAYLGLFMLCV) form a helical membrane-spanning segment. The Cytoplasmic portion of the chain corresponds to 108–122 (SYQVDERTCIQFSMK). Residues 123-143 (LLYFLLSALGLTVCVLAVAFA) traverse the membrane as a helical segment. Residues 144–193 (AHHYSQLTQFTCETTLDSCQCKLPSSEPLSRTFVYRDVTDCTSVTGTFKL) lie on the Extracellular side of the membrane. The chain crosses the membrane as a helical span at residues 194 to 214 (FLLIQMILNLVCGLVCLLACF). Residues 215–243 (VMWKHRYQVFYVGVRICSLTASEGPQQKI) are Cytoplasmic-facing.

Isoform 1 is expressed exclusively in heart and skeletal muscle. Isoform 2 is expressed in heart, skeletal muscle, thymus, prostate, testis, ovary, small intestine, colon and spleen.

It is found in the cell membrane. The protein localises to the sarcolemma. Its subcellular location is the postsynaptic cell membrane. Component of the dystrophin-glycoprotein complex (DGC), a complex that spans the muscle plasma membrane and forms a link between the F-actin cytoskeleton and the extracellular matrix. Preferentially associates with the sarcoglycan subcomplex of the DGC. The chain is Sarcospan (SSPN) from Homo sapiens (Human).